Here is a 448-residue protein sequence, read N- to C-terminus: Trigger factor (448 aa).

Residues 161–246 enclose the PPIase FKBP-type domain; it reads GDQVTIDFEG…VHKVAGKQLP (86 aa). A disordered region spans residues 428–448; sequence ALQAAQQQEGAEEEAQEETSA. A compositionally biased stretch (acidic residues) spans 437 to 448; sequence GAEEEAQEETSA.

This sequence belongs to the FKBP-type PPIase family. Tig subfamily.

Its subcellular location is the cytoplasm. The catalysed reaction is [protein]-peptidylproline (omega=180) = [protein]-peptidylproline (omega=0). Its function is as follows. Involved in protein export. Acts as a chaperone by maintaining the newly synthesized protein in an open conformation. Functions as a peptidyl-prolyl cis-trans isomerase. This Chromohalobacter salexigens (strain ATCC BAA-138 / DSM 3043 / CIP 106854 / NCIMB 13768 / 1H11) protein is Trigger factor.